Reading from the N-terminus, the 301-residue chain is tRNA dimethylallyltransferase (301 aa).

Residue 12–19 (GPTASGKT) coordinates ATP. Substrate is bound at residue 14 to 19 (TASGKT). The tract at residues 37–40 (DSLS) is interaction with substrate tRNA.

This sequence belongs to the IPP transferase family. In terms of assembly, monomer. Requires Mg(2+) as cofactor.

The catalysed reaction is adenosine(37) in tRNA + dimethylallyl diphosphate = N(6)-dimethylallyladenosine(37) in tRNA + diphosphate. In terms of biological role, catalyzes the transfer of a dimethylallyl group onto the adenine at position 37 in tRNAs that read codons beginning with uridine, leading to the formation of N6-(dimethylallyl)adenosine (i(6)A). The protein is tRNA dimethylallyltransferase of Sulfurovum sp. (strain NBC37-1).